Here is a 473-residue protein sequence, read N- to C-terminus: Cysteine--tRNA ligase (473 aa).

Position 28 (Cys-28) interacts with Zn(2+). The 'HIGH' region signature appears at Pro-30 to Asn-40. Zn(2+) is bound by residues Cys-210, His-235, and Glu-239. Residues Lys-267–Ser-271 carry the 'KMSKS' region motif. Lys-270 serves as a coordination point for ATP.

This sequence belongs to the class-I aminoacyl-tRNA synthetase family. Monomer. Requires Zn(2+) as cofactor.

The protein localises to the cytoplasm. It catalyses the reaction tRNA(Cys) + L-cysteine + ATP = L-cysteinyl-tRNA(Cys) + AMP + diphosphate. The protein is Cysteine--tRNA ligase of Fusobacterium nucleatum subsp. nucleatum (strain ATCC 25586 / DSM 15643 / BCRC 10681 / CIP 101130 / JCM 8532 / KCTC 2640 / LMG 13131 / VPI 4355).